Here is a 484-residue protein sequence, read N- to C-terminus: MKFKQDFFTQLPEFYAQVYPQGISNPHWLAWSEDVAKLIDLQQPTDALLQGLSGNAAVEGASYYAQVYSGHQFGGYTPRLGDGRSIILGEALGPQGAWDVALKGGGPTPYSRHGDGRAVMRSAVREFLVSEALHHLGVPTTRALAVIGSDMPVWRESQETAAITVRLARSHIRFGHFEFFCHSERGQADKLTQLLNFTLKQHYPHLSCDLAGYKAWFLQVVQDTAKLIAHWQAIGFAHGVMNTDNMSILGDSFDFGPFAFLDTFQEDFICNHSDPEGRYAFGQQPGIGLWNLQRLAQALTPVIPSDDLIAALNQYQHALVQHYLMLMRAKLGLAERADSTAEQDQQDLELIGRFTVLMEKNQLDYSNTWRRFGQLDPSSAHSSLRDDFIDLNEFDAWYQAYQTRLGKVTDIEAWQQARNSVNPKYILRNYLAQEAIIAVEEGNLAPLERLHQVLRQPFAEQVEHEDLAKRPPDWGQGLIMSCSS.

ATP is bound by residues G81, G83, R84, K103, D115, G116, R166, and R173. D244 acts as the Proton acceptor in catalysis. Positions 245 and 254 each coordinate Mg(2+). An ATP-binding site is contributed by D254.

Belongs to the SELO family. Mg(2+) serves as cofactor. It depends on Mn(2+) as a cofactor.

It catalyses the reaction L-seryl-[protein] + ATP = 3-O-(5'-adenylyl)-L-seryl-[protein] + diphosphate. It carries out the reaction L-threonyl-[protein] + ATP = 3-O-(5'-adenylyl)-L-threonyl-[protein] + diphosphate. The enzyme catalyses L-tyrosyl-[protein] + ATP = O-(5'-adenylyl)-L-tyrosyl-[protein] + diphosphate. The catalysed reaction is L-histidyl-[protein] + UTP = N(tele)-(5'-uridylyl)-L-histidyl-[protein] + diphosphate. It catalyses the reaction L-seryl-[protein] + UTP = O-(5'-uridylyl)-L-seryl-[protein] + diphosphate. It carries out the reaction L-tyrosyl-[protein] + UTP = O-(5'-uridylyl)-L-tyrosyl-[protein] + diphosphate. In terms of biological role, nucleotidyltransferase involved in the post-translational modification of proteins. It can catalyze the addition of adenosine monophosphate (AMP) or uridine monophosphate (UMP) to a protein, resulting in modifications known as AMPylation and UMPylation. The protein is Protein nucleotidyltransferase YdiU of Shewanella sp. (strain MR-7).